Consider the following 629-residue polypeptide: MTIKNVLKLAALLGVLALVQAEEQTYRMCVPQKYYEDCLNLLKDPSEAGIRMECVAGRDRIDCLDKINQRKADVLASEPEDMYVAYHTKNSDYKVISEIRTQEDKDAAFRYEGIILVKKNSNIHSLKELRGAKSCHTGFGRNVGFKIPVTKLKNAHILKVSMDPELTATERELKALSEFFSESCLVGTYSPYPETDRLLKKKYPNLCALCEKPEQCNYPDKFSGYDGAIRCLDKGKGEVAFTKVQFIKKYFGMVPGVTAEGDPSEFEYLCEDGSRRPLNGPACSWAQRPWTGYISNVDAVSGDEKLHNLQHRLEKFFENGLHAENKEAASHLLINPNAVYHSKPQAVDPKEYLEKAGYKDVIERDGSAIRKMKMCVQTDVEMQKCDTMRRAAYSREIRPEIECVQEKDCILAVKDNKADMVAVPAQNYKEARDGKLKPIVYESYGPNNVYVAVVDSALTKENLQSMPIHYNGQDHRAEKAAAYLNKLRGINTCQTTPSSEKNIMIVNAQQLEQYKNKQLLCSSLDKKPVTEWQSCNLEANLPVGVFIRETMTPVEQETMKHLFVSLSDKFGSKGKLPDVFTLFGQYKDNVHNVLFADDAVEFVTELKNPNTNEQTYNGLKCDTNTIKKN.

An N-terminal signal peptide occupies residues 1 to 21; sequence MTIKNVLKLAALLGVLALVQA. Transferrin-like domains follow at residues 26–366 and 372–621; these read YRMC…ERDG and MKMC…GLKC. 2 disulfides stabilise this stretch: cysteine 29–cysteine 63 and cysteine 38–cysteine 54. Residue tyrosine 111 participates in Fe(3+) binding. Disulfide bonds link cysteine 135-cysteine 231, cysteine 184-cysteine 210, cysteine 207-cysteine 216, cysteine 270-cysteine 283, cysteine 375-cysteine 409, and cysteine 385-cysteine 403. Hydrogencarbonate contacts are provided by threonine 137, arginine 141, valine 143, and glycine 144. Tyrosine 225 serves as a coordination point for Fe(3+). Fe(3+) is bound by residues aspartate 408 and histidine 561.

This sequence belongs to the transferrin family. Monomer.

Transferrins are iron binding transport proteins which bind Fe(3+) ion in association with the binding of an anion, usually bicarbonate. This transferrin binds only one Fe(3+) ion per protein molecule. Transports iron ions from the hemolymph into the eggs during the vitellogenic stage (oogenesis). In Sarcophaga peregrina (Flesh fly), this protein is Transferrin.